A 644-amino-acid polypeptide reads, in one-letter code: 1-deoxy-D-xylulose-5-phosphate synthase (644 aa).

Thiamine diphosphate contacts are provided by residues His78 and 120 to 122 (GHA). Asp149 contacts Mg(2+). Thiamine diphosphate contacts are provided by residues 150–151 (AA), Asn178, and Glu373. Asn178 serves as a coordination point for Mg(2+).

This sequence belongs to the transketolase family. DXPS subfamily. Homodimer. Mg(2+) is required as a cofactor. Thiamine diphosphate serves as cofactor.

The catalysed reaction is D-glyceraldehyde 3-phosphate + pyruvate + H(+) = 1-deoxy-D-xylulose 5-phosphate + CO2. The protein operates within metabolic intermediate biosynthesis; 1-deoxy-D-xylulose 5-phosphate biosynthesis; 1-deoxy-D-xylulose 5-phosphate from D-glyceraldehyde 3-phosphate and pyruvate: step 1/1. In terms of biological role, catalyzes the acyloin condensation reaction between C atoms 2 and 3 of pyruvate and glyceraldehyde 3-phosphate to yield 1-deoxy-D-xylulose-5-phosphate (DXP). This is 1-deoxy-D-xylulose-5-phosphate synthase from Chlamydia caviae (strain ATCC VR-813 / DSM 19441 / 03DC25 / GPIC) (Chlamydophila caviae).